The chain runs to 151 residues: Deoxyuridine 5'-triphosphate nucleotidohydrolase (151 aa).

Residue R28 participates in Mg(2+) binding. Residues 72-74, 86-89, Y92, G97, I99, and R115 each bind dUTP; these read PRS and GVID.

The protein belongs to the dUTPase family. Mg(2+) is required as a cofactor.

The catalysed reaction is dUTP + H2O = dUMP + diphosphate + H(+). Its function is as follows. This enzyme is involved in nucleotide metabolism: it produces dUMP, the immediate precursor of thymidine nucleotides and it decreases the intracellular concentration of dUTP so that uracil cannot be incorporated into DNA. This Monkeypox virus protein is Deoxyuridine 5'-triphosphate nucleotidohydrolase (OPG046).